A 188-amino-acid polypeptide reads, in one-letter code: MSRALDKAGRWIGWAFFADLANGLALTFGYMFSRPVTMQYPDKEKWLPYSRYRGHHFLKRDDEGEIKCVACELCARICPCDCIEVVPYEDEKGNRRPAKFEIDTARCLFCGLCEDACPADAIALGQQYEFSSFSSRDLVIGRDDLLAKPGKAMTGGGVVAARLNTERDVLVEASEPRGYNWWRNIRRK.

2 consecutive 4Fe-4S ferredoxin-type domains span residues 56-88 and 98-127; these read HFLK…VVPY and AKFE…LGQQ. 8 residues coordinate [4Fe-4S] cluster: Cys68, Cys71, Cys74, Cys78, Cys107, Cys110, Cys113, and Cys117.

Belongs to the complex I 23 kDa subunit family. As to quaternary structure, NDH-1 is composed of 14 different subunits. Subunits NuoA, H, J, K, L, M, N constitute the membrane sector of the complex. [4Fe-4S] cluster serves as cofactor.

Its subcellular location is the cell inner membrane. The enzyme catalyses a quinone + NADH + 5 H(+)(in) = a quinol + NAD(+) + 4 H(+)(out). In terms of biological role, NDH-1 shuttles electrons from NADH, via FMN and iron-sulfur (Fe-S) centers, to quinones in the respiratory chain. The immediate electron acceptor for the enzyme in this species is believed to be ubiquinone. Couples the redox reaction to proton translocation (for every two electrons transferred, four hydrogen ions are translocated across the cytoplasmic membrane), and thus conserves the redox energy in a proton gradient. This Rhizobium meliloti (strain 1021) (Ensifer meliloti) protein is NADH-quinone oxidoreductase subunit I 2.